Reading from the N-terminus, the 285-residue chain is 2-dehydro-3-deoxyphosphooctonate aldolase (285 aa).

It belongs to the KdsA family.

It localises to the cytoplasm. It catalyses the reaction D-arabinose 5-phosphate + phosphoenolpyruvate + H2O = 3-deoxy-alpha-D-manno-2-octulosonate-8-phosphate + phosphate. It functions in the pathway carbohydrate biosynthesis; 3-deoxy-D-manno-octulosonate biosynthesis; 3-deoxy-D-manno-octulosonate from D-ribulose 5-phosphate: step 2/3. Its pathway is bacterial outer membrane biogenesis; lipopolysaccharide biosynthesis. The protein is 2-dehydro-3-deoxyphosphooctonate aldolase of Bordetella parapertussis (strain 12822 / ATCC BAA-587 / NCTC 13253).